The chain runs to 220 residues: Uracil-DNA glycosylase (220 aa).

The active-site Proton acceptor is the D60.

This sequence belongs to the uracil-DNA glycosylase (UDG) superfamily. UNG family.

Its subcellular location is the cytoplasm. The catalysed reaction is Hydrolyzes single-stranded DNA or mismatched double-stranded DNA and polynucleotides, releasing free uracil.. Excises uracil residues from the DNA which can arise as a result of misincorporation of dUMP residues by DNA polymerase or due to deamination of cytosine. This is Uracil-DNA glycosylase from Francisella tularensis subsp. novicida (strain U112).